A 199-amino-acid chain; its full sequence is Golgi to ER traffic protein 1 (199 aa).

Over 1 to 11 the chain is Lumenal; the sequence is MLLPDLHPYTI. The helical transmembrane segment at 12-31 threads the bilayer; that stretch reads LLSIFLVLVAKQLVATIGKS. The Cytoplasmic portion of the chain corresponds to 32-115; sequence TIQEFVWLVY…SIDKASNALI (84 aa). Positions 76 to 116 form a coiled coil; it reads YAKWTKLNRQADKLSAELQKLNQEIQQQKSSIDKASNALIL. A helical transmembrane segment spans residues 116–136; that stretch reads LVLTTLPIWIARVFYRKTHLF. Residues 137 to 160 lie on the Lumenal side of the membrane; it reads YIRQGIFPKYVEWVLALPFLPNGA. Residues 161–177 form a helical membrane-spanning segment; that stretch reads VGLTIWMFAVNSVVSNF. Residues 178–199 are Cytoplasmic-facing; it reads SFLVSFPFAKRVSKPVRDTKVE.

It belongs to the WRB/GET1 family. As to quaternary structure, component of the Golgi to ER traffic (GET) complex, which is composed of GET1, GET2 and GET3. Within the complex, GET1 and GET2 form a heterotetramer which is stabilized by phosphatidylinositol binding and which binds to the GET3 homodimer.

It localises to the endoplasmic reticulum membrane. Its subcellular location is the golgi apparatus membrane. Its function is as follows. Required for the post-translational delivery of tail-anchored (TA) proteins to the endoplasmic reticulum. Together with GET2, acts as a membrane receptor for soluble GET3, which recognizes and selectively binds the transmembrane domain of TA proteins in the cytosol. The GET complex cooperates with the HDEL receptor ERD2 to mediate the ATP-dependent retrieval of resident ER proteins that contain a C-terminal H-D-E-L retention signal from the Golgi to the ER. The sequence is that of Golgi to ER traffic protein 1 from Candida albicans (strain SC5314 / ATCC MYA-2876) (Yeast).